The following is a 224-amino-acid chain: uncharacterized protein (224 aa).

This is an uncharacterized protein from Listeria innocua serovar 6a (strain ATCC BAA-680 / CLIP 11262).